Consider the following 134-residue polypeptide: Holo-[acyl-carrier-protein] synthase (134 aa).

Residues Asp8 and Glu58 each coordinate Mg(2+).

This sequence belongs to the P-Pant transferase superfamily. AcpS family. The cofactor is Mg(2+).

The protein localises to the cytoplasm. The enzyme catalyses apo-[ACP] + CoA = holo-[ACP] + adenosine 3',5'-bisphosphate + H(+). Functionally, transfers the 4'-phosphopantetheine moiety from coenzyme A to a Ser of acyl-carrier-protein. The polypeptide is Holo-[acyl-carrier-protein] synthase (Acidiphilium cryptum (strain JF-5)).